A 175-amino-acid chain; its full sequence is Protein-export protein SecB (175 aa).

Belongs to the SecB family. As to quaternary structure, homotetramer, a dimer of dimers. One homotetramer interacts with 1 SecA dimer.

The protein localises to the cytoplasm. In terms of biological role, one of the proteins required for the normal export of preproteins out of the cell cytoplasm. It is a molecular chaperone that binds to a subset of precursor proteins, maintaining them in a translocation-competent state. It also specifically binds to its receptor SecA. This chain is Protein-export protein SecB, found in Ehrlichia chaffeensis (strain ATCC CRL-10679 / Arkansas).